Reading from the N-terminus, the 1061-residue chain is Eukaryotic translation initiation factor 3 subunit A (1061 aa).

Polar residues predominate over residues Gln114–Val126. Positions Gln114 to Glu133 are disordered. In terms of domain architecture, PCI spans Leu339–Phe523. Coiled-coil stretches lie at residues Glu609–Asp724 and Arg789–Ala906. Residues Arg828 to Lys901 are compositionally biased toward basic and acidic residues. The tract at residues Arg828–Gly1061 is disordered. 2 stretches are compositionally biased toward pro residues: residues Ser950 to Ile962 and Ala1000 to Arg1011.

It belongs to the eIF-3 subunit A family. As to quaternary structure, component of the eukaryotic translation initiation factor 3 (eIF-3) complex.

Its subcellular location is the cytoplasm. Its function is as follows. RNA-binding component of the eukaryotic translation initiation factor 3 (eIF-3) complex, which is involved in protein synthesis of a specialized repertoire of mRNAs and, together with other initiation factors, stimulates binding of mRNA and methionyl-tRNAi to the 40S ribosome. The eIF-3 complex specifically targets and initiates translation of a subset of mRNAs involved in cell proliferation. This Chaetomium globosum (strain ATCC 6205 / CBS 148.51 / DSM 1962 / NBRC 6347 / NRRL 1970) (Soil fungus) protein is Eukaryotic translation initiation factor 3 subunit A.